A 244-amino-acid chain; its full sequence is Lactate utilization protein A (244 aa).

This sequence belongs to the LutA/YkgE family.

Functionally, is involved in L-lactate degradation and allows cells to grow with lactate as the sole carbon source. In Oceanobacillus iheyensis (strain DSM 14371 / CIP 107618 / JCM 11309 / KCTC 3954 / HTE831), this protein is Lactate utilization protein A.